Reading from the N-terminus, the 369-residue chain is MRVILSGGGTGGHIYPALALAEVIKQHEPDAEFLYVGSERGVEANIVPKTGMAFKQLAVQGFSRSLSLHNIKTVQLFLKAVKVSKKIIKEFKPDVVIGTGGYVAGAVVYAAQRMNIPTVIHEQNSVAGVTNKFLARGATKIGVAFEVAKQQFPSEKVVLVGNPRAQQVAQLKSTFSWQTIGLRDDKATVLIFGGSQGAPAINLAVIDAIPEFNERSYQVVIVTGPKRYDNVLDLLRERNIEAADNIRILPYIDNMPNVLKQTDAIVSRAGATSIAEITALGIPSILIPSLHVTGDHQTKNAQSLVDVGAAINITESDLNGQSLIAAVDTLLLDENVSDKMAAQATKVGMPDAGERLYQLILQAMANKKD.

UDP-N-acetyl-alpha-D-glucosamine contacts are provided by residues 10 to 12, asparagine 124, serine 195, isoleucine 252, and glutamine 297; that span reads TGG.

This sequence belongs to the glycosyltransferase 28 family. MurG subfamily.

It is found in the cell membrane. It catalyses the reaction Mur2Ac(oyl-L-Ala-gamma-D-Glu-L-Lys-D-Ala-D-Ala)-di-trans,octa-cis-undecaprenyl diphosphate + UDP-N-acetyl-alpha-D-glucosamine = beta-D-GlcNAc-(1-&gt;4)-Mur2Ac(oyl-L-Ala-gamma-D-Glu-L-Lys-D-Ala-D-Ala)-di-trans,octa-cis-undecaprenyl diphosphate + UDP + H(+). It participates in cell wall biogenesis; peptidoglycan biosynthesis. Its function is as follows. Cell wall formation. Catalyzes the transfer of a GlcNAc subunit on undecaprenyl-pyrophosphoryl-MurNAc-pentapeptide (lipid intermediate I) to form undecaprenyl-pyrophosphoryl-MurNAc-(pentapeptide)GlcNAc (lipid intermediate II). The polypeptide is UDP-N-acetylglucosamine--N-acetylmuramyl-(pentapeptide) pyrophosphoryl-undecaprenol N-acetylglucosamine transferase (Leuconostoc citreum (strain KM20)).